The following is a 132-amino-acid chain: Homeobox protein ceh-1 (132 aa).

Residues 1 to 60 (MRRARTAFTYEQLVALENKFKTSRYLSVVERLNLAIQLQLSETQVKIWFQNRRTKWKKHN) constitute a DNA-binding region (homeobox). The disordered stretch occupies residues 56-80 (WKKHNPGQDANTPQTPPSSDETQIQ). The span at 63–80 (QDANTPQTPPSSDETQIQ) shows a compositional bias: polar residues.

The protein resides in the nucleus. The chain is Homeobox protein ceh-1 (ceh-1) from Caenorhabditis elegans.